A 296-amino-acid chain; its full sequence is MAQNYKDELSGVETTGHEWDGLRELNNPLPKWWLYLFYVCIAWAMVYYVFYPAWPLGKTYTKGILGYSQREELDSKLAEAKAGQAKYLTAIAAKSVDEIQKDKDLLGFAMAGGRSYFNENCAACHGAGGQGAKGFPTLADDVWLWGGTSADIYKTIQHGIRSDDGDTRGTPGTGMTAFGKDGILTRDQIDQVTDYVLSLNGKAADAGKVAKGKTVYDENCAACHGDTAQGALAAGVDGVGAPPLKQANWLYGGDKATLVETVTNGRAGVMPAWSKRLDDATIKSLAVYVHNLGGGK.

Topologically, residues 1–31 (MAQNYKDELSGVETTGHEWDGLRELNNPLPK) are cytoplasmic. A helical membrane pass occupies residues 32–52 (WWLYLFYVCIAWAMVYYVFYP). Over 53–296 (AWPLGKTYTK…VYVHNLGGGK (244 aa)) the chain is Periplasmic. Cytochrome c domains follow at residues 108–200 (FAMA…LSLN) and 207–293 (GKVA…HNLG). Heme c-binding residues include C121, C124, H125, M175, C220, C223, H224, and M270.

This sequence belongs to the CcoP / FixP family. As to quaternary structure, component of the cbb3-type cytochrome c oxidase at least composed of CcoN, CcoO, CcoQ and CcoP. Heme c is required as a cofactor.

The protein localises to the cell inner membrane. It participates in energy metabolism; oxidative phosphorylation. Functionally, C-type cytochrome. Part of the cbb3-type cytochrome c oxidase complex. CcoP subunit is required for transferring electrons from donor cytochrome c via its heme groups to CcoO subunit. From there, electrons are shuttled to the catalytic binuclear center of CcoN subunit where oxygen reduction takes place. The complex also functions as a proton pump. This chain is Cbb3-type cytochrome c oxidase subunit CcoP, found in Azospirillum sp. (strain B510).